Reading from the N-terminus, the 996-residue chain is Disease resistance protein RGA4 (996 aa).

The segment at 1–176 (MEAALLSGFI…PRIHEADLVG (176 aa)) is structured coiled coil (CC) domain. Residues 111–138 (NLQLAQQLQRLKRMAAEANQRKQRYTAA) adopt a coiled-coil conformation. The NB-ARC domain maps to 180–462 (DREELLEQLA…RWLAEGFVEP (283 aa)). LRR repeat units follow at residues 481-503 (RNII…TYGM), 504-528 (MREF…KFVP), 529-549 (KYVR…NFNG), 577-599 (LRVL…ICNL), 600-621 (VLLK…IAKL), 622-644 (KDLE…VFGL), 698-722 (MNKL…DLRE), 759-781 (PCYL…VTSL), 782-804 (RGLK…ALSN), 805-830 (LSYL…GFPR), and 851-874 (LPFL…QIEC).

Belongs to the disease resistance NB-LRR family. Forms homodimer or heterodimer with RGA5 through its coiled coil (CC) domain. As to expression, expressed in leaves.

The protein localises to the cytoplasm. Functionally, disease resistance (R) protein. Resistance proteins guard the plant against pathogens that contain an appropriate avirulence protein via an indirect interaction with this avirulence protein. That triggers a defense system including the hypersensitive response, which restricts the pathogen growth. Contribution of RGA5 is required to recognize the effector avirulence proteins AVR-Pia and AVR1-CO39 from M.oryzae. Acts as a constitutively active cell death inducer that is repressed by RGA5. Immune response triggered by the RGA4-RGA5 -mediated recognition of AVR1-CO39 confers resistance to X.oryzae pathovars. This Oryza sativa subsp. japonica (Rice) protein is Disease resistance protein RGA4.